A 304-amino-acid chain; its full sequence is Ribosomal protein L11 methyltransferase (304 aa).

S-adenosyl-L-methionine is bound by residues Thr156, Gly177, Asp199, and Asn240.

This sequence belongs to the methyltransferase superfamily. PrmA family.

Its subcellular location is the cytoplasm. It catalyses the reaction L-lysyl-[protein] + 3 S-adenosyl-L-methionine = N(6),N(6),N(6)-trimethyl-L-lysyl-[protein] + 3 S-adenosyl-L-homocysteine + 3 H(+). In terms of biological role, methylates ribosomal protein L11. This chain is Ribosomal protein L11 methyltransferase, found in Symbiobacterium thermophilum (strain DSM 24528 / JCM 14929 / IAM 14863 / T).